The primary structure comprises 150 residues: Large ribosomal subunit protein uL11 (150 aa).

Belongs to the universal ribosomal protein uL11 family. Part of the ribosomal stalk of the 50S ribosomal subunit. Interacts with L10 and the large rRNA to form the base of the stalk. L10 forms an elongated spine to which L12 dimers bind in a sequential fashion forming a multimeric L10(L12)X complex. One or more lysine residues are methylated.

Its function is as follows. Forms part of the ribosomal stalk which helps the ribosome interact with GTP-bound translation factors. The chain is Large ribosomal subunit protein uL11 from Ureaplasma parvum serovar 3 (strain ATCC 27815 / 27 / NCTC 11736).